The chain runs to 62 residues: Large ribosomal subunit protein bL35 (62 aa).

The disordered stretch occupies residues Glu25–Ile62. The segment covering Ser53–Ile62 has biased composition (basic and acidic residues).

The protein belongs to the bacterial ribosomal protein bL35 family.

In Mycoplasmopsis fermentans (Mycoplasma fermentans), this protein is Large ribosomal subunit protein bL35.